The sequence spans 168 residues: Lipoprotein signal peptidase (168 aa).

Helical transmembrane passes span 5–25 (SPYA…KHLV), 37–57 (LVPF…SMFS), 59–79 (FGDT…LYLA), and 85–105 (GHVI…GNLI). Catalysis depends on residues D115 and D133. The helical transmembrane segment at 125-145 (SFAIFNLADAFISVGAALVVF) threads the bilayer.

This sequence belongs to the peptidase A8 family.

The protein localises to the cell inner membrane. The enzyme catalyses Release of signal peptides from bacterial membrane prolipoproteins. Hydrolyzes -Xaa-Yaa-Zaa-|-(S,diacylglyceryl)Cys-, in which Xaa is hydrophobic (preferably Leu), and Yaa (Ala or Ser) and Zaa (Gly or Ala) have small, neutral side chains.. It functions in the pathway protein modification; lipoprotein biosynthesis (signal peptide cleavage). Functionally, this protein specifically catalyzes the removal of signal peptides from prolipoproteins. The protein is Lipoprotein signal peptidase of Mesorhizobium japonicum (strain LMG 29417 / CECT 9101 / MAFF 303099) (Mesorhizobium loti (strain MAFF 303099)).